We begin with the raw amino-acid sequence, 534 residues long: Serine/threonine-protein kinase 35 (534 aa).

The interval 32-176 is disordered; the sequence is VESHGSLGAQ…AAAARAMDPV (145 aa). 2 stretches are compositionally biased toward low complexity: residues 39–65 and 166–176; these read GAQASPASAAAAEGSATRRARAATSRA and PAAAARAMDPV. One can recognise a Protein kinase domain in the interval 202 to 530; the sequence is YSLLAEIGRG…FELETRMDQV (329 aa). ATP contacts are provided by residues 208–216 and Lys-231; that span reads IGRGSYGVV. The Proton acceptor role is filled by Asp-360.

It belongs to the protein kinase superfamily. Ser/Thr protein kinase family. As to quaternary structure, interacts with PDLIM1/CLP-36. In terms of processing, autophosphorylated. Expressed in testis.

The protein localises to the nucleus. It localises to the nucleolus. It is found in the cytoplasm. The enzyme catalyses L-seryl-[protein] + ATP = O-phospho-L-seryl-[protein] + ADP + H(+). It catalyses the reaction L-threonyl-[protein] + ATP = O-phospho-L-threonyl-[protein] + ADP + H(+). This chain is Serine/threonine-protein kinase 35 (STK35), found in Homo sapiens (Human).